A 186-amino-acid polypeptide reads, in one-letter code: uncharacterized protein (186 aa).

This is an uncharacterized protein from Acanthamoeba polyphaga mimivirus (APMV).